The primary structure comprises 340 residues: Guanine nucleotide-binding protein subunit beta-1 (340 aa).

Phosphoserine is present on serine 29. WD repeat units follow at residues glycine 53–alanine 92, leucine 95–arginine 134, glycine 141–serine 179, glycine 182–threonine 221, glycine 224–methionine 263, asparagine 268–isoleucine 307, and glycine 310–asparagine 340.

The protein belongs to the WD repeat G protein beta family. G proteins are composed of 3 units, alpha, beta and gamma. As to expression, expressed in the brain neuropil and cortex, and the thoracic ganglion (at protein level). Expression detected in eye at protein level but not at mRNA level, suggesting cross reactivity of antibodies to the similar Gbeta76C protein.

Guanine nucleotide-binding proteins (G proteins) are involved as a modulator or transducer in various transmembrane signaling systems. The beta and gamma chains are required for the GTPase activity, for replacement of GDP by GTP, and for G protein-effector interaction. In Drosophila melanogaster (Fruit fly), this protein is Guanine nucleotide-binding protein subunit beta-1 (Gbeta13F).